The primary structure comprises 412 residues: uncharacterized protein (412 aa).

In terms of domain architecture, UmuC spans 20–199 (FFYFDFDAFF…LPIVELPGIG (180 aa)).

The protein belongs to the DNA polymerase type-Y family.

This is an uncharacterized protein from Mycoplasma pneumoniae (strain ATCC 29342 / M129 / Subtype 1) (Mycoplasmoides pneumoniae).